The primary structure comprises 73 residues: Putative sulfur carrier protein AF_0556 (73 aa).

Residue C11 is the Cysteine persulfide intermediate of the active site.

This sequence belongs to the sulfur carrier protein TusA family.

This is Putative sulfur carrier protein AF_0556 from Archaeoglobus fulgidus (strain ATCC 49558 / DSM 4304 / JCM 9628 / NBRC 100126 / VC-16).